Here is a 431-residue protein sequence, read N- to C-terminus: Phosphoribosylamine--glycine ligase (431 aa).

One can recognise an ATP-grasp domain in the interval 109–316; that stretch reads KDFLARHGIP…LVDLVEAAID (208 aa). 135 to 196 provides a ligand contact to ATP; it reads VREKGAPIVV…EEFLDGEEAS (62 aa). Mg(2+) contacts are provided by Glu-286 and Asn-288.

Belongs to the GARS family. Mg(2+) is required as a cofactor. Requires Mn(2+) as cofactor.

The catalysed reaction is 5-phospho-beta-D-ribosylamine + glycine + ATP = N(1)-(5-phospho-beta-D-ribosyl)glycinamide + ADP + phosphate + H(+). Its pathway is purine metabolism; IMP biosynthesis via de novo pathway; N(1)-(5-phospho-D-ribosyl)glycinamide from 5-phospho-alpha-D-ribose 1-diphosphate: step 2/2. This is Phosphoribosylamine--glycine ligase from Xanthomonas campestris pv. campestris (strain ATCC 33913 / DSM 3586 / NCPPB 528 / LMG 568 / P 25).